The chain runs to 165 residues: Protein FAM219A (165 aa).

Residue Met-1 is modified to N-acetylmethionine. The segment at 1 to 114 (MMEEIDRFQV…SRYSSSGYSS (114 aa)) is disordered. Positions 32-44 (CDAREEKQRELAR) are enriched in basic and acidic residues. Residues 49-63 (KNGSMGSPVNQQPKK) show a composition bias toward polar residues. Phosphoserine occurs at positions 55 and 85. A Phosphothreonine modification is found at Thr-96. Phosphoserine occurs at positions 98 and 105. A compositionally biased stretch (low complexity) spans 105–114 (SRYSSSGYSS).

Belongs to the FAM219 family.

In Macaca fascicularis (Crab-eating macaque), this protein is Protein FAM219A (FAM219A).